A 218-amino-acid chain; its full sequence is Thymidylate kinase (218 aa).

15 to 22 (GLDRSGKS) provides a ligand contact to ATP.

The protein belongs to the thymidylate kinase family.

It carries out the reaction dTMP + ATP = dTDP + ADP. The protein operates within pyrimidine metabolism; dTTP biosynthesis. In terms of biological role, catalyzes the conversion of dTMP to dTDP. The sequence is that of Thymidylate kinase from Caenorhabditis elegans.